A 724-amino-acid polypeptide reads, in one-letter code: Eukaryotic elongation factor 2 kinase (724 aa).

An N-acetylalanine modification is found at Ala-2. Ser-27 carries the post-translational modification Phosphoserine. The residue at position 61 (Ser-61) is a Phosphoserine; by autocatalysis. Ser-70, Ser-73, and Ser-77 each carry phosphoserine. The interval Phe-80–His-93 is calmodulin-binding. An Alpha-type protein kinase domain is found at Arg-115–Phe-325. Phosphoserine is present on Ser-242. Position 295-301 (Gly-295–Val-301) interacts with ATP. Thr-347 and Thr-352 each carry phosphothreonine; by autocatalysis. Residues Glu-353–Ser-476 form a disordered region. Ser-358 bears the Phosphoserine; by MAPK13 and CDK1 mark. The span at Ser-358–Ser-376 shows a compositional bias: low complexity. At Ser-365 the chain carries Phosphoserine; by autocatalysis, RPS6KA1 and RPS6KB1. Residues Ser-385–Ser-403 show a composition bias toward polar residues. At Ser-391 the chain carries Phosphoserine. Phosphoserine; by AMPK is present on Ser-397. 2 stretches are compositionally biased toward basic and acidic residues: residues Gly-421–Glu-435 and Ser-444–Ser-469. Ser-434, Ser-444, and Ser-469 each carry phosphoserine. Ser-473 is subject to Phosphoserine; by autocatalysis. A Phosphoserine modification is found at Ser-476. Ser-499 is modified (phosphoserine; by PKA).

This sequence belongs to the protein kinase superfamily. Alpha-type protein kinase family. Monomer or homodimer. Interacts with Calmodulin/CALM1; this interaction is strictly required for phosphorylation activity. Autophosphorylated at multiple residues, Thr-347 being the major site. Phosphorylated by AMP-activated protein kinase AMPK at Ser-397 leading to EEF2K activation and protein synthesis inhibition. Phosphorylated by TRPM7 at Ser-77 resulting in improved protein stability, higher EE2F phosphorylated and subsequently reduced rate of protein synthesis. Phosphorylation by other kinases such as CDK1 and MAPK13 at Ser-358 or RPS6KA1 and RPS6KB1 at Ser-365 instead decrease EEF2K activity and promote protein synthesis. In terms of tissue distribution, ubiquitously expressed. Particularly abundant in skeletal muscle and heart.

The catalysed reaction is [translation elongation factor 2] + ATP = [translation elongation factor 2]-phosphate + ADP + H(+). Undergoes calcium/calmodulin-dependent intramolecular autophosphorylation, and this results in it becoming partially calcium/calmodulin-independent. In terms of biological role, threonine kinase that regulates protein synthesis by controlling the rate of peptide chain elongation. Upon activation by a variety of upstream kinases including AMPK or TRPM7, phosphorylates the elongation factor EEF2 at a single site, renders it unable to bind ribosomes and thus inactive. In turn, the rate of protein synthesis is reduced. The sequence is that of Eukaryotic elongation factor 2 kinase (Eef2k) from Mus musculus (Mouse).